Here is a 46-residue protein sequence, read N- to C-terminus: Mu-segestritoxin-Sf1g (46 aa).

4 disulfides stabilise this stretch: cysteine 3–cysteine 19, cysteine 10–cysteine 22, cysteine 18–cysteine 42, and cysteine 24–cysteine 40. The interval 31–33 (RPW) is keys region for toxin activity.

This sequence belongs to the neurotoxin 16 (SFI) family. Expressed by the venom gland.

It localises to the secreted. In terms of biological role, insecticidal toxin. It inhibits insect voltage-gated sodium channels (Nav) by partially blocking the channel pore in DUM neurons from the American cockroach, not by acting as a gating modifier. The inhibition is only partially reversible after prolonged washout. In vivo, the toxin causes flaccid paralysis followed by death when injected into Heliothis virescens larvae. It also causes uncoordinated movements followed by full paralysis to sheep blowflies (Lucilia cuprina). When the toxin is fused to snowdrop lectin, it is orally active against larvae of the tomato moth (Laconobia oleracea), the rice brown planthopper (Nilaparvata lugens), and the peach-potato aphid (Myzus persicae). The protein is Mu-segestritoxin-Sf1g of Segestria florentina (Tube-web spider).